The chain runs to 210 residues: Large ribosomal subunit protein uL3 (210 aa).

Residues 136 to 156 (THGTEKAHRSGGSIGNNTEPG) are disordered.

This sequence belongs to the universal ribosomal protein uL3 family. As to quaternary structure, part of the 50S ribosomal subunit. Forms a cluster with proteins L14 and L19.

In terms of biological role, one of the primary rRNA binding proteins, it binds directly near the 3'-end of the 23S rRNA, where it nucleates assembly of the 50S subunit. This chain is Large ribosomal subunit protein uL3, found in Solidesulfovibrio magneticus (strain ATCC 700980 / DSM 13731 / RS-1) (Desulfovibrio magneticus).